A 160-amino-acid chain; its full sequence is Large ribosomal subunit protein uL22c (160 aa).

It belongs to the universal ribosomal protein uL22 family. Part of the 50S ribosomal subunit.

Its subcellular location is the plastid. It localises to the chloroplast. This protein binds specifically to 23S rRNA. In terms of biological role, the globular domain of the protein is located near the polypeptide exit tunnel on the outside of the subunit, while an extended beta-hairpin is found that lines the wall of the exit tunnel in the center of the 70S ribosome. The protein is Large ribosomal subunit protein uL22c (rpl22) of Aethionema grandiflorum (Persian stone-cress).